Reading from the N-terminus, the 621-residue chain is UvrABC system protein C (621 aa).

The region spanning 11–90 (TTPGVYLYKD…IKKHRPRYNI (80 aa)) is the GIY-YIG domain. Residues 200–235 (KELVELLQKDMLYASEALEFEKAATLRDQIQAIKHT) form the UVR domain.

This sequence belongs to the UvrC family. In terms of assembly, interacts with UvrB in an incision complex.

The protein localises to the cytoplasm. Functionally, the UvrABC repair system catalyzes the recognition and processing of DNA lesions. UvrC both incises the 5' and 3' sides of the lesion. The N-terminal half is responsible for the 3' incision and the C-terminal half is responsible for the 5' incision. This chain is UvrABC system protein C, found in Lawsonia intracellularis (strain PHE/MN1-00).